The primary structure comprises 148 residues: UPF0260 protein YE2365 (148 aa).

This sequence belongs to the UPF0260 family.

The sequence is that of UPF0260 protein YE2365 from Yersinia enterocolitica serotype O:8 / biotype 1B (strain NCTC 13174 / 8081).